The chain runs to 214 residues: EEF1A lysine methyltransferase 1 (214 aa).

Ser2 bears the N-acetylserine mark. A Phosphoserine modification is found at Ser2.

It belongs to the class I-like SAM-binding methyltransferase superfamily. EFM5 family.

Its subcellular location is the cytoplasm. It catalyses the reaction L-lysyl-[protein] + 3 S-adenosyl-L-methionine = N(6),N(6),N(6)-trimethyl-L-lysyl-[protein] + 3 S-adenosyl-L-homocysteine + 3 H(+). Its function is as follows. Protein-lysine methyltransferase that selectively catalyzes the trimethylation of EEF1A at 'Lys-79'. The chain is EEF1A lysine methyltransferase 1 from Mus musculus (Mouse).